Here is a 331-residue protein sequence, read N- to C-terminus: Ketol-acid reductoisomerase (NADP(+)) (331 aa).

One can recognise a KARI N-terminal Rossmann domain in the interval 2–182 (IKKYYDADCN…GAGRAGILET (181 aa)). NADP(+) contacts are provided by residues 25-28 (YGSQ), Arg-48, and Ser-51. His-108 is an active-site residue. Gly-134 serves as a coordination point for NADP(+). The 147-residue stretch at 183 to 329 (TFREETETDL…AELRKMMSWI (147 aa)) folds into the KARI C-terminal knotted domain. Residues Asp-191, Glu-195, Glu-227, and Glu-231 each contribute to the Mg(2+) site. Residue Ser-252 coordinates substrate.

It belongs to the ketol-acid reductoisomerase family. Mg(2+) is required as a cofactor.

The enzyme catalyses (2R)-2,3-dihydroxy-3-methylbutanoate + NADP(+) = (2S)-2-acetolactate + NADPH + H(+). The catalysed reaction is (2R,3R)-2,3-dihydroxy-3-methylpentanoate + NADP(+) = (S)-2-ethyl-2-hydroxy-3-oxobutanoate + NADPH + H(+). The protein operates within amino-acid biosynthesis; L-isoleucine biosynthesis; L-isoleucine from 2-oxobutanoate: step 2/4. It functions in the pathway amino-acid biosynthesis; L-valine biosynthesis; L-valine from pyruvate: step 2/4. Functionally, involved in the biosynthesis of branched-chain amino acids (BCAA). Catalyzes an alkyl-migration followed by a ketol-acid reduction of (S)-2-acetolactate (S2AL) to yield (R)-2,3-dihydroxy-isovalerate. In the isomerase reaction, S2AL is rearranged via a Mg-dependent methyl migration to produce 3-hydroxy-3-methyl-2-ketobutyrate (HMKB). In the reductase reaction, this 2-ketoacid undergoes a metal-dependent reduction by NADPH to yield (R)-2,3-dihydroxy-isovalerate. This is Ketol-acid reductoisomerase (NADP(+)) from Brachyspira hyodysenteriae (strain ATCC 49526 / WA1).